Here is a 702-residue protein sequence, read N- to C-terminus: MARKTPIERYRNIGISAHIDAGKTTTTERILFYTGVNHKIGEVHDGAATMDWMEQEQERGITITSAATTCFWSGMAKQFEPHHVNIIDTPGHVDFTIEVERSMRVLDGAVMVYCAVGGVQPQSETVWRQANKYKVPRIAFVNKMDRMGANFLRVVGQLKSRLGANPVPLQLAIGAEEKFTGIIDLVKMKAINWNEADQGVTFEYEEIPADMAELAAEWHQNLVESAAEASDELMDKYLGGEELTEEEIKKALRQRVLKSEIILVTCGSAFKNKGVQAMLDAVIEYLPAPTDVESINGILDDGKDTPAVRHSDDKEPFSALAFKIATDPFVGNLTFFRVYSGIVNSGDTVLNSVKSQRERLGRIVQMHANKREEIKEVHAGDIAAAIGLKDVTTGDTLCDPNNPIILERMEFPEPVISVAVEPKTKADQEKMGMALGRLAKEDPSFRVWTDEESGQTIIAGMGELHLDILVDRMRREFNVEANVGKPQVAYRETIRETVKDVEGKHAKQSGGRGQYGHVVIDMSPLPPGGVGYEFVNEIVGGSIPKEFIPAVDKGIQEQLKSGPLAGYPVVDVKVRLHYGSYHDVDSSELAFKLAGSIAFKEGFKRAKPVLLEPIMKVEVETPEDYMGDVMGDLNRRRGIIEGMEDTATGKTVRVKVPLSEMFGYATDLRSQTQGRASYSMEFLEYAEAPSNVAKAVIEARGK.

The region spanning 8–290 (ERYRNIGISA…AVIEYLPAPT (283 aa)) is the tr-type G domain. GTP is bound by residues 17-24 (AHIDAGKT), 88-92 (DTPGH), and 142-145 (NKMD).

This sequence belongs to the TRAFAC class translation factor GTPase superfamily. Classic translation factor GTPase family. EF-G/EF-2 subfamily.

Its subcellular location is the cytoplasm. Catalyzes the GTP-dependent ribosomal translocation step during translation elongation. During this step, the ribosome changes from the pre-translocational (PRE) to the post-translocational (POST) state as the newly formed A-site-bound peptidyl-tRNA and P-site-bound deacylated tRNA move to the P and E sites, respectively. Catalyzes the coordinated movement of the two tRNA molecules, the mRNA and conformational changes in the ribosome. The protein is Elongation factor G of Yersinia pseudotuberculosis serotype O:1b (strain IP 31758).